A 581-amino-acid chain; its full sequence is Tail sheath protein (581 aa).

It belongs to the myoviridae tail sheath protein family. Homomultimer.

The protein resides in the virion. It localises to the host cytoplasm. Polymerizes as an extended structure around the baseplate-tail tube complex. During ejection, the sheath shifts to a contracted form, thereby making the inner tail tube protrude through the host cell envelope. This Mycobacterium phage Bxz1 (Mycobacteriophage Bxz1) protein is Tail sheath protein.